We begin with the raw amino-acid sequence, 492 residues long: Glycylpeptide N-tetradecanoyltransferase 2 (492 aa).

Positions 1–77 (MAEDSESAAS…SASDSQEIKN (77 aa)) are disordered. Positions 15-32 (ELDDQDTCGIDGDNEEEN) are enriched in acidic residues. Over residues 46–57 (KKKKKKQKRKKE) the composition is skewed to basic residues. Over residues 61-72 (SGGTKSDSASDS) the composition is skewed to polar residues. Tetradecanoyl-CoA is bound by residues His111, Trp116, Leu244, Val246, Ser252, Arg254, Val255, and Ala256.

This sequence belongs to the NMT family.

The protein localises to the cytoplasm. It is found in the membrane. The enzyme catalyses N-terminal glycyl-[protein] + tetradecanoyl-CoA = N-tetradecanoylglycyl-[protein] + CoA + H(+). It carries out the reaction N-terminal glycyl-L-lysyl-[protein] + tetradecanoyl-CoA = N-terminal glycyl-(N(6)-tetradecanoyl)-L-lysyl-[protein] + CoA + H(+). Functionally, adds a myristoyl group to the N-terminal glycine residue of certain cellular and viral proteins. Also able to mediate N-terminal lysine myristoylation of proteins. In Danio rerio (Zebrafish), this protein is Glycylpeptide N-tetradecanoyltransferase 2.